The following is a 271-amino-acid chain: Formamidopyrimidine-DNA glycosylase (271 aa).

Proline 2 functions as the Schiff-base intermediate with DNA in the catalytic mechanism. The active-site Proton donor is glutamate 3. Residue lysine 56 is the Proton donor; for beta-elimination activity of the active site. Histidine 89, arginine 107, and lysine 151 together coordinate DNA. The FPG-type zinc-finger motif lies at 236–270; it reads NVYGRAGLPCRQCGTPVRLLRQGQRSTYFCPHCQR. The active-site Proton donor; for delta-elimination activity is arginine 260.

The protein belongs to the FPG family. Monomer. The cofactor is Zn(2+).

The catalysed reaction is Hydrolysis of DNA containing ring-opened 7-methylguanine residues, releasing 2,6-diamino-4-hydroxy-5-(N-methyl)formamidopyrimidine.. It carries out the reaction 2'-deoxyribonucleotide-(2'-deoxyribose 5'-phosphate)-2'-deoxyribonucleotide-DNA = a 3'-end 2'-deoxyribonucleotide-(2,3-dehydro-2,3-deoxyribose 5'-phosphate)-DNA + a 5'-end 5'-phospho-2'-deoxyribonucleoside-DNA + H(+). Involved in base excision repair of DNA damaged by oxidation or by mutagenic agents. Acts as a DNA glycosylase that recognizes and removes damaged bases. Has a preference for oxidized purines, such as 7,8-dihydro-8-oxoguanine (8-oxoG). Has AP (apurinic/apyrimidinic) lyase activity and introduces nicks in the DNA strand. Cleaves the DNA backbone by beta-delta elimination to generate a single-strand break at the site of the removed base with both 3'- and 5'-phosphates. The chain is Formamidopyrimidine-DNA glycosylase from Acidovorax sp. (strain JS42).